A 971-amino-acid polypeptide reads, in one-letter code: uncharacterized protein (971 aa).

A signal peptide spans 1–24 (MQSNLLKVLGVLAIVATLVCFIFA). A disordered region spans residues 127–146 (RTRPGKSNLDDSGQMIPIPR). 6 helical membrane passes run 611–631 (IKAI…LGFA), 721–741 (LGLS…IVII), 753–773 (AFMA…FLLF), 795–815 (VVMM…LDFV), 832–852 (FIGT…INWF), and 865–885 (GVNM…YGYV). The tract at residues 933-971 (TGRAKSRLEQRNRTLEHAEQNSKKYKKRIGENTNEETLK) is disordered. Basic and acidic residues predominate over residues 938–954 (SRLEQRNRTLEHAEQNS).

The protein belongs to the TrbL/VirB6 family.

Its subcellular location is the cell membrane. This is an uncharacterized protein from Rickettsia prowazekii (strain Madrid E).